The chain runs to 369 residues: 4-hydroxy-3-methylbut-2-en-1-yl diphosphate synthase (flavodoxin) (369 aa).

Positions 270, 273, 305, and 312 each coordinate [4Fe-4S] cluster.

Belongs to the IspG family. [4Fe-4S] cluster is required as a cofactor.

The enzyme catalyses (2E)-4-hydroxy-3-methylbut-2-enyl diphosphate + oxidized [flavodoxin] + H2O + 2 H(+) = 2-C-methyl-D-erythritol 2,4-cyclic diphosphate + reduced [flavodoxin]. It functions in the pathway isoprenoid biosynthesis; isopentenyl diphosphate biosynthesis via DXP pathway; isopentenyl diphosphate from 1-deoxy-D-xylulose 5-phosphate: step 5/6. Converts 2C-methyl-D-erythritol 2,4-cyclodiphosphate (ME-2,4cPP) into 1-hydroxy-2-methyl-2-(E)-butenyl 4-diphosphate. The sequence is that of 4-hydroxy-3-methylbut-2-en-1-yl diphosphate synthase (flavodoxin) from Pseudomonas fluorescens (strain ATCC BAA-477 / NRRL B-23932 / Pf-5).